Here is a 304-residue protein sequence, read N- to C-terminus: Rhomboid-like protein 19 (304 aa).

The next 6 helical transmembrane spans lie at 23–43 (LVVGHLVVQFIPATVPYLALI), 58–78 (GYFELSVYGVVFSTVSLLFMG), 93–113 (FIFVVNFLTYLCVFVTAIALY), 120–140 (VYLYMPFAGFHGVLAGLLVGI), 158–175 (WLPSIMLILSIASSFFTL), and 179–198 (AYLPTLIFGTYMGWLYLRYL). The interval 247 to 304 (SEDHDYSTSGAPLPGSDSAEASRRRERGARALEERLGTERLVPARNKDELQSDGLDNV) is disordered. Positions 266-284 (EASRRRERGARALEERLGT) are enriched in basic and acidic residues.

It belongs to the peptidase S54 family.

Its subcellular location is the membrane. In terms of biological role, probable rhomboid-type serine protease that catalyzes intramembrane proteolysis. In Arabidopsis thaliana (Mouse-ear cress), this protein is Rhomboid-like protein 19.